Consider the following 402-residue polypeptide: MKIQTEVDELGFFGEYGGQYVPETLMPAIIELKKAYEDAKSDTHFKKEFNYYLSEYVGRETPLTFAESYTKLLGGAKIYLKREDLNHTGAHKINNAIGQALLAKRMGKTKLVAETGAGQHGVASATIAALFDMDLIVFMGSEDIKRQQLNVFRMELLGAKVVSVSDGQGTLSDAVNKALQYWVNHVEDTHYLLGSALGPDPFPTMVRDFQSVIGNEIKSQILSKEGRLPDALVACVGGGSNSIGTFYPFIQDDVKLYGVEAAGKGSHTHNHALAIGKGKPGVLHGSKMYLIQNDDGQIELAHSISAGLDYPGIGPEHSYYNDIGRVSYVSATDNEAMEALITFSKVEGIIPAIESAHALSYVEKLAPNMDEKEIIVVTISGRGDKDMETIKQYKENGGEQNE.

Lysine 92 is subject to N6-(pyridoxal phosphate)lysine.

The protein belongs to the TrpB family. Tetramer of two alpha and two beta chains. Pyridoxal 5'-phosphate is required as a cofactor.

The catalysed reaction is (1S,2R)-1-C-(indol-3-yl)glycerol 3-phosphate + L-serine = D-glyceraldehyde 3-phosphate + L-tryptophan + H2O. Its pathway is amino-acid biosynthesis; L-tryptophan biosynthesis; L-tryptophan from chorismate: step 5/5. The beta subunit is responsible for the synthesis of L-tryptophan from indole and L-serine. The protein is Tryptophan synthase beta chain of Staphylococcus epidermidis (strain ATCC 35984 / DSM 28319 / BCRC 17069 / CCUG 31568 / BM 3577 / RP62A).